We begin with the raw amino-acid sequence, 353 residues long: Peptide chain release factor 1 (353 aa).

The residue at position 230 (Gln230) is an N5-methylglutamine.

This sequence belongs to the prokaryotic/mitochondrial release factor family. In terms of processing, methylated by PrmC. Methylation increases the termination efficiency of RF1.

The protein resides in the cytoplasm. Its function is as follows. Peptide chain release factor 1 directs the termination of translation in response to the peptide chain termination codons UAG and UAA. The chain is Peptide chain release factor 1 from Gluconobacter oxydans (strain 621H) (Gluconobacter suboxydans).